We begin with the raw amino-acid sequence, 371 residues long: Pyruvate dehydrogenase E1 component subunit alpha (371 aa).

In terms of assembly, heterodimer of an alpha and a beta chain. Thiamine diphosphate is required as a cofactor.

It carries out the reaction N(6)-[(R)-lipoyl]-L-lysyl-[protein] + pyruvate + H(+) = N(6)-[(R)-S(8)-acetyldihydrolipoyl]-L-lysyl-[protein] + CO2. Functionally, the pyruvate dehydrogenase complex catalyzes the overall conversion of pyruvate to acetyl-CoA and CO(2). It contains multiple copies of three enzymatic components: pyruvate dehydrogenase (E1), dihydrolipoamide acetyltransferase (E2) and lipoamide dehydrogenase (E3). The protein is Pyruvate dehydrogenase E1 component subunit alpha of Bacillus cereus.